The following is a 1531-amino-acid chain: Multidrug resistance-associated protein 1 (1531 aa).

Over 1 to 33 (MALRGFCSADGSDPLWDWNVTWYTSNPDFTKCF) the chain is Extracellular. The N-linked (GlcNAc...) asparagine glycan is linked to asparagine 19. A helical transmembrane segment spans residues 34 to 54 (QNTVLVWVPCFYLWACFPFYF). At 55–74 (LYLSRHDRGYIQMTLLNKTK) the chain is on the cytoplasmic side. Residues 75-95 (TALGFLLWIVCWADLFYSFWE) form a helical membrane-spanning segment. Topologically, residues 96-100 (RSRGI) are extracellular. A helical transmembrane segment spans residues 101–121 (FLAPVFLVSPTLLGITMLLAT). Residues 122–133 (FLIQLERRKGVQ) lie on the Cytoplasmic side of the membrane. The chain crosses the membrane as a helical span at residues 134–154 (SSGIMLTFWLVALLCALAILR). At 155–172 (SKIMTALKEDVQVDLFRD) the chain is on the extracellular side. The helical transmembrane segment at 173 to 193 (MTFYVYFSLVLIQLVLSCFSD) threads the bilayer. At 194 to 316 (RSPLFSETIH…KEWNPSLFKV (123 aa)) the chain is on the cytoplasmic side. Tyrosine 277 is subject to Phosphotyrosine. At serine 289 the chain carries Phosphoserine. Residues 317 to 337 (LYKTFGPYFLMSFFFKAIHDL) form a helical membrane-spanning segment. The region spanning 325-608 (FLMSFFFKAI…LPMVISSIVQ (284 aa)) is the ABC transmembrane type-1 1 domain. The Extracellular segment spans residues 338-363 (MMFSGPEILKLLINFVNDTKAPDWQG). Residues 364-384 (YFYTALLFVAACLQTLVLHQY) traverse the membrane as a helical segment. Residues 385-440 (FHICFVSGMRIKTAVIGAVYRKALVITNAARKSSTVGEIVNLMSVDAQRFMDLATY) lie on the Cytoplasmic side of the membrane. Residues 441–461 (INMIWSAPLQVILALYLLWRN) traverse the membrane as a helical segment. Residues 462–464 (LGP) are Extracellular-facing. A helical transmembrane segment spans residues 465 to 485 (PILAGVAVMVLMVPVNAVMAM). Topologically, residues 486–547 (KTKTYQVAHM…VLKKSAYLAA (62 aa)) are cytoplasmic. N6-succinyllysine is present on lysine 503. Residues 548–568 (VGTFTWVCTPFLVALCTFAVY) form a helical membrane-spanning segment. The Extracellular segment spans residues 569–590 (VTIDKNNVLDAQKAFVSLALFN). The chain crosses the membrane as a helical span at residues 591–611 (ILRFPLNILPMVISSIVQASV). Over 612 to 967 (SLKRLRIFLS…VKLSVYWDYM (356 aa)) the chain is Cytoplasmic. The 225-residue stretch at 644-868 (ITVRNATFTW…DGAFAEFLRT (225 aa)) folds into the ABC transporter 1 domain. Position 678–685 (678–685 (GQVGCGKS)) interacts with ATP. The tract at residues 871–893 (SAEQEQDPEDNGVTGVSGPGKEA) is disordered. Serine 905, serine 915, and serine 930 each carry phosphoserine. The interval 917–938 (SSSYSGDVSRQHNSTAELQKDG) is disordered. The segment covering 922-933 (GDVSRQHNSTAE) has biased composition (polar residues). Residues 968–988 (KAIGLFISFLSIFLFICNHVA) form a helical membrane-spanning segment. Positions 975–1256 (SFLSIFLFIC…LVRMSSEMET (282 aa)) constitute an ABC transmembrane type-1 2 domain. The Extracellular segment spans residues 989–1025 (ALASNYWLSLWTDDPIVNGTQEHTKVRLSVYGALGIS). Asparagine 1006 carries N-linked (GlcNAc...) asparagine glycosylation. A helical transmembrane segment spans residues 1026–1046 (QGIAVFGYSMAVSIGGILASR). At 1047 to 1089 (CLHVDLLHSILRSPMSFFERTPSGNLVNRFSKELDTVDSMIPE) the chain is on the cytoplasmic side. Residues 1090-1110 (VIKMFMGSLFNVIGACIVILL) traverse the membrane as a helical segment. Residue alanine 1111 is a topological domain, extracellular. A helical transmembrane segment spans residues 1112-1132 (TPIAAIIIPPLGLIYFFVQRF). Residues 1133–1203 (YVASSRQLKR…VANRWLAVRL (71 aa)) lie on the Cytoplasmic side of the membrane. A helical membrane pass occupies residues 1204–1224 (ECVGNCIVLFAALFAVISRHS). Topologically, residues 1225–1226 (LS) are extracellular. The chain crosses the membrane as a helical span at residues 1227 to 1247 (AGLVGLSVSYSLQVTTYLNWL). Over 1248–1531 (VRMSSEMETN…YNMARDAGLV (284 aa)) the chain is Cytoplasmic. The 235-residue stretch at 1293–1527 (VEFRNYCLRY…RGLFYNMARD (235 aa)) folds into the ABC transporter 2 domain. 1327–1334 (GRTGAGKS) is a binding site for ATP.

The protein belongs to the ABC transporter superfamily. ABCC family. Conjugate transporter (TC 3.A.1.208) subfamily.

The protein resides in the cell membrane. It localises to the basolateral cell membrane. The enzyme catalyses ATP + H2O + xenobioticSide 1 = ADP + phosphate + xenobioticSide 2.. It carries out the reaction an S-substituted glutathione(in) + ATP + H2O = an S-substituted glutathione(out) + ADP + phosphate + H(+). The catalysed reaction is sphing-4-enine 1-phosphate(in) + ATP + H2O = sphing-4-enine 1-phosphate(out) + ADP + phosphate + H(+). It catalyses the reaction leukotriene C4(in) + ATP + H2O = leukotriene C4(out) + ADP + phosphate + H(+). The enzyme catalyses 17beta-estradiol 17-O-(beta-D-glucuronate)(in) + ATP + H2O = 17beta-estradiol 17-O-(beta-D-glucuronate)(out) + ADP + phosphate + H(+). It carries out the reaction daunorubicin(in) + ATP + H2O = daunorubicin(out) + ADP + phosphate + H(+). The catalysed reaction is vincristine(in) + ATP + H2O = vincristine(out) + ADP + phosphate + H(+). It catalyses the reaction 2',3'-cGAMP(in) + ATP + H2O = 2',3'-cGAMP(out) + ADP + phosphate + H(+). The enzyme catalyses S-[(2E,6E,10E)-geranylgeranyl]-L-glutathione(in) + ATP + H2O = S-[(2E,6E,10E)-geranylgeranyl]-L-glutathione(out) + ADP + phosphate + H(+). It carries out the reaction prostaglandin A2-S-(R)-glutathione(in) + ATP + H2O = prostaglandin A2-S-(R)-glutathione(out) + ADP + phosphate + H(+). The catalysed reaction is prostaglandin A2-S-(S)-glutathione(in) + ATP + H2O = prostaglandin A2-S-(S)-glutathione(out) + ADP + phosphate + H(+). With respect to regulation, MK 571 inhibits sphingosine 1-phosphate and leukotriene C4 export. Mediates export of organic anions and drugs from the cytoplasm. Mediates ATP-dependent transport of glutathione and glutathione conjugates, leukotriene C4, estradiol-17-beta-o-glucuronide, methotrexate, antiviral drugs and other xenobiotics. Confers resistance to anticancer drugs by decreasing accumulation of drug in cells, and by mediating ATP- and GSH-dependent drug export. Hydrolyzes ATP with low efficiency. Catalyzes the export of sphingosine 1-phosphate from mast cells independently of their degranulation. Participates in inflammatory response by allowing export of leukotriene C4 from leukotriene C4-synthesizing cells. Mediates ATP-dependent, GSH-independent cyclic GMP-AMP (cGAMP) export. Thus, by limiting intracellular cGAMP concentrations negatively regulates the cGAS-STING pathway. Exports S-geranylgeranyl-glutathione (GGG) in lymphoid cells and stromal compartments of lymphoid organs. ABCC1 (via extracellular transport) with GGT5 (via GGG catabolism) establish GGG gradients within lymphoid tissues to position P2RY8-positive lymphocytes at germinal centers in lymphoid follicles and restrict their chemotactic transmigration from blood vessels to the bone marrow parenchyma. Mediates basolateral export of GSH-conjugated R- and S-prostaglandin A2 diastereomers in polarized epithelial cells. The sequence is that of Multidrug resistance-associated protein 1 from Macaca fascicularis (Crab-eating macaque).